We begin with the raw amino-acid sequence, 404 residues long: Peroxisomal biogenesis factor 9 (404 aa).

3 helical membrane passes run 73–93 (FLFL…SLVF), 94–114 (LLGV…LLMG), and 149–169 (FGLD…FQVV). The disordered stretch occupies residues 180 to 214 (DGQRSQQSQNSGMNVASSSRGRHQLVPDRPGSQLS). Over residues 181–198 (GQRSQQSQNSGMNVASSS) the composition is skewed to polar residues. The chain crosses the membrane as a helical span at residues 349 to 369 (FFVGLVSWIVDETAACVVFCL).

The protein localises to the peroxisome membrane. Functionally, essential for the import of peroxisomal matrix proteins. This Yarrowia lipolytica (strain CLIB 122 / E 150) (Yeast) protein is Peroxisomal biogenesis factor 9 (PEX9).